The sequence spans 1136 residues: Nitric oxide synthase, inducible (1136 aa).

Residues cysteine 107 and cysteine 112 each coordinate Zn(2+). Cysteine 197 is a binding site for heme b. Residues glutamine 260, tryptophan 369, tyrosine 370, and glutamate 374 each contribute to the L-arginine site. Residues arginine 378, valine 459, tryptophan 460, and phenylalanine 473 each coordinate (6R)-L-erythro-5,6,7,8-tetrahydrobiopterin. Tyrosine 488 contributes to the heme b binding site. The tract at residues 512–532 is calmodulin-binding; that stretch reads LSILAKAVLLASLLLQKTMAA. The Flavodoxin-like domain maps to 536–674; that stretch reads VTVIYATETG…AFRTWAVTAF (139 aa). FMN is bound by residues threonine 542, glutamate 543, threonine 544, lysine 546, serine 547, serine 588, threonine 589, serine 625, cysteine 632, glutamate 658, and glutamine 662. The region spanning 727-967 is the FAD-binding FR-type domain; the sequence is KNVIPMKLKF…VRSADGFRLP (241 aa). Residue arginine 747 participates in NADP(+) binding. The FAD site is built by histidine 769, arginine 903, tyrosine 905, serine 906, threonine 921, alanine 923, tyrosine 927, valine 940, cysteine 941, and serine 942. NADP(+)-binding residues include threonine 981, arginine 1014, serine 1043, arginine 1044, lysine 1050, tyrosine 1052, glutamine 1054, and aspartate 1087.

The protein belongs to the NOS family. As to quaternary structure, homodimer. Requires heme b as cofactor. FAD is required as a cofactor. The cofactor is FMN. (6R)-L-erythro-5,6,7,8-tetrahydrobiopterin serves as cofactor.

The protein localises to the cytoplasm. Its subcellular location is the cytosol. It catalyses the reaction 2 L-arginine + 3 NADPH + 4 O2 + H(+) = 2 L-citrulline + 2 nitric oxide + 3 NADP(+) + 4 H2O. Not stimulated by calcium/calmodulin. Functionally, produces nitric oxide (NO) which is a messenger molecule with diverse functions throughout the body. NO may serve as both a paracrine and autocrine signal for modulating osteoclast bone resorption. Also has nitrosylase activity and mediates cysteine S-nitrosylation of cytoplasmic target proteins such COX2. This chain is Nitric oxide synthase, inducible (NOS2), found in Gallus gallus (Chicken).